We begin with the raw amino-acid sequence, 449 residues long: Chromosomal replication initiator protein DnaA (449 aa).

Residues 1–72 are domain I, interacts with DnaA modulators; the sequence is MPNLEELWAY…VEGVYEFAQL (72 aa). A domain II region spans residues 72 to 109; the sequence is LEVDPVIMTKDELQPAPATDQRPAVEEDDQNLTFKAKT. Residues 110–326 form a domain III, AAA+ region region; the sequence is HLNPKYTFDH…GALVRVQAFS (217 aa). Residues G154, G156, K157, and T158 each coordinate ATP. The domain IV, binds dsDNA stretch occupies residues 327-449; that stretch reads TMKNEDITTS…ELRNILKNRG (123 aa).

This sequence belongs to the DnaA family. In terms of assembly, oligomerizes as a right-handed, spiral filament on DNA at oriC.

Its subcellular location is the cytoplasm. Functionally, plays an essential role in the initiation and regulation of chromosomal replication. ATP-DnaA binds to the origin of replication (oriC) to initiate formation of the DNA replication initiation complex once per cell cycle. Binds the DnaA box (a 9 base pair repeat at the origin) and separates the double-stranded (ds)DNA. Forms a right-handed helical filament on oriC DNA; dsDNA binds to the exterior of the filament while single-stranded (ss)DNA is stabiized in the filament's interior. The ATP-DnaA-oriC complex binds and stabilizes one strand of the AT-rich DNA unwinding element (DUE), permitting loading of DNA polymerase. After initiation quickly degrades to an ADP-DnaA complex that is not apt for DNA replication. Binds acidic phospholipids. The protein is Chromosomal replication initiator protein DnaA of Lacticaseibacillus paracasei (strain ATCC 334 / BCRC 17002 / CCUG 31169 / CIP 107868 / KCTC 3260 / NRRL B-441) (Lactobacillus paracasei).